A 257-amino-acid chain; its full sequence is Type III pantothenate kinase (257 aa).

24–31 (MIGNSRLH) contributes to the ATP binding site. Substrate-binding positions include Y96 and 100-103 (GIDR). D102 functions as the Proton acceptor in the catalytic mechanism. D122 provides a ligand contact to K(+). T125 lines the ATP pocket. T180 lines the substrate pocket.

This sequence belongs to the type III pantothenate kinase family. In terms of assembly, homodimer. It depends on NH4(+) as a cofactor. The cofactor is K(+).

It is found in the cytoplasm. The catalysed reaction is (R)-pantothenate + ATP = (R)-4'-phosphopantothenate + ADP + H(+). Its pathway is cofactor biosynthesis; coenzyme A biosynthesis; CoA from (R)-pantothenate: step 1/5. Its function is as follows. Catalyzes the phosphorylation of pantothenate (Pan), the first step in CoA biosynthesis. In Synechocystis sp. (strain ATCC 27184 / PCC 6803 / Kazusa), this protein is Type III pantothenate kinase.